We begin with the raw amino-acid sequence, 188 residues long: Large ribosomal subunit protein eL18 (188 aa).

Lys119 participates in a covalent cross-link: Glycyl lysine isopeptide (Lys-Gly) (interchain with G-Cter in SUMO2). Ser130 is modified (phosphoserine). The segment at 150 to 188 (RHFGKAPRTPHSHTKPYVRSKGRKFERARGRWASRGYKN) is disordered. Basic residues-rich tracts occupy residues 151–171 (HFGK…RSKG) and 179–188 (GRWASRGYKN). Thr158 carries the phosphothreonine modification. A Glycyl lysine isopeptide (Lys-Gly) (interchain with G-Cter in SUMO2) cross-link involves residue Lys164.

Belongs to the eukaryotic ribosomal protein eL18 family. Component of the large ribosomal subunit.

It is found in the cytoplasm. It localises to the cytosol. The protein localises to the rough endoplasmic reticulum. Its function is as follows. Component of the large ribosomal subunit. The ribosome is a large ribonucleoprotein complex responsible for the synthesis of proteins in the cell. The chain is Large ribosomal subunit protein eL18 (RPL18) from Oryctolagus cuniculus (Rabbit).